Consider the following 44-residue polypeptide: Cytochrome b559 subunit beta (44 aa).

The chain crosses the membrane as a helical span at residues 19 to 35 (WLAIHGIAVPTIFFLGA). H23 is a heme binding site.

This sequence belongs to the PsbE/PsbF family. As to quaternary structure, heterodimer of an alpha subunit and a beta subunit. PSII is composed of 1 copy each of membrane proteins PsbA, PsbB, PsbC, PsbD, PsbE, PsbF, PsbH, PsbI, PsbJ, PsbK, PsbL, PsbM, PsbT, PsbX, PsbY, PsbZ, Psb30/Ycf12, at least 3 peripheral proteins of the oxygen-evolving complex and a large number of cofactors. It forms dimeric complexes. Requires heme b as cofactor.

The protein resides in the plastid. The protein localises to the chloroplast thylakoid membrane. Functionally, this b-type cytochrome is tightly associated with the reaction center of photosystem II (PSII). PSII is a light-driven water:plastoquinone oxidoreductase that uses light energy to abstract electrons from H(2)O, generating O(2) and a proton gradient subsequently used for ATP formation. It consists of a core antenna complex that captures photons, and an electron transfer chain that converts photonic excitation into a charge separation. This is Cytochrome b559 subunit beta from Chlamydomonas reinhardtii (Chlamydomonas smithii).